The chain runs to 490 residues: Adenylosuccinate synthetase 1, chloroplastic (490 aa).

Residues 1 to 47 (MSLSTLSHPAAAAAAATGSGKSHFRTAPAAQSVRFPKARPPVPAAVS) constitute a chloroplast transit peptide. The interval 14–36 (AAATGSGKSHFRTAPAAQSVRFP) is disordered. Residues 77-83 (GDEGKGK) and 105-107 (GHT) contribute to the GTP site. The Proton acceptor role is filled by Asp-78. Residues Asp-78 and Gly-105 each contribute to the Mg(2+) site. Residues 78-81 (DEGK), 103-106 (NAGH), Thr-195, Arg-209, Gln-289, Thr-304, and Arg-368 each bind IMP. His-106 acts as the Proton donor in catalysis. 364–370 (TTTGRPR) is a substrate binding site. GTP contacts are provided by residues Arg-370, 396–398 (KLD), and 479–481 (GVG).

It belongs to the adenylosuccinate synthetase family. In terms of assembly, homodimer. Requires Mg(2+) as cofactor.

The protein resides in the plastid. It localises to the chloroplast. The enzyme catalyses IMP + L-aspartate + GTP = N(6)-(1,2-dicarboxyethyl)-AMP + GDP + phosphate + 2 H(+). It participates in purine metabolism; AMP biosynthesis via de novo pathway; AMP from IMP: step 1/2. Plays an important role in the de novo pathway and in the salvage pathway of purine nucleotide biosynthesis. Catalyzes the first committed step in the biosynthesis of AMP from IMP. This chain is Adenylosuccinate synthetase 1, chloroplastic, found in Sorghum bicolor (Sorghum).